Consider the following 986-residue polypeptide: Vacuolar membrane protease (986 aa).

The Cytoplasmic segment spans residues 1-16 (MAPLRLSRANPLAFAR). The chain crosses the membrane as a helical span at residues 17–37 (WPVTLITAVVYLAFLIPLLIV). The Vacuolar segment spans residues 38–392 (HHVVPSPPTA…TTFVLFELHT (355 aa)). Asparagine 121 carries N-linked (GlcNAc...) asparagine glycosylation. Histidine 176 and aspartate 188 together coordinate Zn(2+). The active-site Proton acceptor is the glutamate 222. Zn(2+)-binding residues include glutamate 223, glutamate 248, and histidine 321. Residues 393-413 (LFALSVTLLVVAPLALLVTGI) form a helical membrane-spanning segment. Over 414-444 (ALTRADKMYLFRTSAKADESLDSVPLQGLRG) the chain is Cytoplasmic. A helical membrane pass occupies residues 445–465 (FFRFPFLFAIPTAVTVGLAYL). At 466-475 (VTKVNPLIIH) the chain is on the vacuolar side. Residues 476 to 496 (SSEYAVWSMMLSAWTFLAWFV) form a helical membrane-spanning segment. Topologically, residues 497–510 (SRMADFARPTALHR) are cytoplasmic. Residues 511 to 531 (IYTLTWMFVLAWVLLVISTVY) form a helical membrane-spanning segment. Residues 532-535 (QNQR) lie on the Vacuolar side of the membrane. The helical transmembrane segment at 536 to 556 (GLAGSYSVFFFFSGTFLATWI) threads the bilayer. Topologically, residues 557-668 (SYLELFSLPR…SASLPTWTWT (112 aa)) are cytoplasmic. A compositionally biased stretch (polar residues) spans 573–585 (QNRPTSRRASSYG). The interval 573–622 (QNRPTSRRASSYGGSRLGTASGEDHEEDDHDAEEEEEEQEPTESTSLLGG) is disordered. Acidic residues predominate over residues 596–613 (DHEEDDHDAEEEEEEQEP). Residues 669 to 689 (LQFLLMAPLVLIMVGPLALLL) traverse the membrane as a helical segment. The Vacuolar portion of the chain corresponds to 690 to 704 (TSALHQTGQDGSSSL). The helical transmembrane segment at 705-725 (FIYVAIAALTTFLLTPLLPFI) threads the bilayer. Residues 726 to 732 (HRHTYHL) lie on the Cytoplasmic side of the membrane. The chain crosses the membrane as a helical span at residues 733–753 (PVFLLLVFLGTLIYNLVAFPF). Residues 754–986 (SPTNRLKLFF…LVEGWKGFSI (233 aa)) lie on the Vacuolar side of the membrane. Residues asparagine 799, asparagine 840, and asparagine 948 are each glycosylated (N-linked (GlcNAc...) asparagine). Residues 840 to 859 (NTTDDKEGDEDTHHPRKARI) are disordered.

This sequence belongs to the peptidase M28 family. Zn(2+) is required as a cofactor.

Its subcellular location is the vacuole membrane. Its function is as follows. May be involved in vacuolar sorting and osmoregulation. The protein is Vacuolar membrane protease of Aspergillus niger (strain ATCC MYA-4892 / CBS 513.88 / FGSC A1513).